The sequence spans 367 residues: Probable butyrate kinase (367 aa).

The protein belongs to the acetokinase family.

The protein resides in the cytoplasm. It catalyses the reaction butanoate + ATP = butanoyl phosphate + ADP. The sequence is that of Probable butyrate kinase from Bacillus cereus (strain Q1).